Consider the following 511-residue polypeptide: Bifunctional purine biosynthesis protein PurH (511 aa).

An MGS-like domain is found at 1-145; the sequence is MKKRALVSVS…KNHKFVSVIV (145 aa).

The protein belongs to the PurH family.

It carries out the reaction (6R)-10-formyltetrahydrofolate + 5-amino-1-(5-phospho-beta-D-ribosyl)imidazole-4-carboxamide = 5-formamido-1-(5-phospho-D-ribosyl)imidazole-4-carboxamide + (6S)-5,6,7,8-tetrahydrofolate. It catalyses the reaction IMP + H2O = 5-formamido-1-(5-phospho-D-ribosyl)imidazole-4-carboxamide. It functions in the pathway purine metabolism; IMP biosynthesis via de novo pathway; 5-formamido-1-(5-phospho-D-ribosyl)imidazole-4-carboxamide from 5-amino-1-(5-phospho-D-ribosyl)imidazole-4-carboxamide (10-formyl THF route): step 1/1. It participates in purine metabolism; IMP biosynthesis via de novo pathway; IMP from 5-formamido-1-(5-phospho-D-ribosyl)imidazole-4-carboxamide: step 1/1. The polypeptide is Bifunctional purine biosynthesis protein PurH (Bacillus thuringiensis subsp. konkukian (strain 97-27)).